The chain runs to 315 residues: MFSPNHTIVTEFILLGLTDDPVLEKILFGVFLAIYLITLAGNLCMILLIRTNSHLQTPMYFFLGHLSFVDICYSSNVTPNMLHNFLSEQKTISYAGCFTQCLLFIALVITEFYILASMALDRYVAICSPLHYSSRMSKNICVCLVTIPYMYGFLSGFSQSLLTFHLSFCGSLEINHFYCADPPLIMLACSDTRVKKMAMFVVAGFNLSSSLFIILLSYLFIFAAIFRIRSAEGRHKAFSTCASHLTIVTLFYGTLFCMYVRPPSEKSVEESKITAVFYTFLSPMLNPLIYSLRNTDVILAMQQMIRGKSFHKIAV.

The Extracellular portion of the chain corresponds to 1-25 (MFSPNHTIVTEFILLGLTDDPVLEK). A glycan (N-linked (GlcNAc...) asparagine) is linked at asparagine 5. The helical transmembrane segment at 26–46 (ILFGVFLAIYLITLAGNLCMI) threads the bilayer. Residues 47–54 (LLIRTNSH) are Cytoplasmic-facing. A helical membrane pass occupies residues 55 to 75 (LQTPMYFFLGHLSFVDICYSS). Over 76 to 99 (NVTPNMLHNFLSEQKTISYAGCFT) the chain is Extracellular. Cysteine 97 and cysteine 189 are joined by a disulfide. A helical transmembrane segment spans residues 100–120 (QCLLFIALVITEFYILASMAL). Over 121-139 (DRYVAICSPLHYSSRMSKN) the chain is Cytoplasmic. A helical membrane pass occupies residues 140-160 (ICVCLVTIPYMYGFLSGFSQS). The Extracellular segment spans residues 161-196 (LLTFHLSFCGSLEINHFYCADPPLIMLACSDTRVKK). Residues 197–217 (MAMFVVAGFNLSSSLFIILLS) form a helical membrane-spanning segment. The Cytoplasmic portion of the chain corresponds to 218-237 (YLFIFAAIFRIRSAEGRHKA). Residues 238–258 (FSTCASHLTIVTLFYGTLFCM) traverse the membrane as a helical segment. At 259-271 (YVRPPSEKSVEES) the chain is on the extracellular side. Residues 272-292 (KITAVFYTFLSPMLNPLIYSL) traverse the membrane as a helical segment. The Cytoplasmic segment spans residues 293–315 (RNTDVILAMQQMIRGKSFHKIAV).

Belongs to the G-protein coupled receptor 1 family.

Its subcellular location is the cell membrane. In terms of biological role, odorant receptor. This Homo sapiens (Human) protein is Olfactory receptor 5M1 (OR5M1).